A 640-amino-acid polypeptide reads, in one-letter code: Threonine--tRNA ligase (640 aa).

The region spanning 1–60 is the TGS domain; that stretch reads MKITFPDGAVKEFEPGVSTADIAASISPGLKKKALAGKLNGELLDLVTPIHEDGAIEIVT. The interval 241 to 538 is catalytic; it reads DHRKLGKELE…LIEEYKGAFP (298 aa). Zn(2+)-binding residues include Cys334, His385, and His515.

It belongs to the class-II aminoacyl-tRNA synthetase family. Homodimer. It depends on Zn(2+) as a cofactor.

The protein localises to the cytoplasm. It catalyses the reaction tRNA(Thr) + L-threonine + ATP = L-threonyl-tRNA(Thr) + AMP + diphosphate + H(+). Its function is as follows. Catalyzes the attachment of threonine to tRNA(Thr) in a two-step reaction: L-threonine is first activated by ATP to form Thr-AMP and then transferred to the acceptor end of tRNA(Thr). Also edits incorrectly charged L-seryl-tRNA(Thr). This chain is Threonine--tRNA ligase, found in Listeria monocytogenes serovar 1/2a (strain ATCC BAA-679 / EGD-e).